Consider the following 324-residue polypeptide: Granaticin polyketide synthase bifunctional cyclase/dehydratase (324 aa).

The disordered stretch occupies residues 1-21; the sequence is MVQPAATPVSLPSPTVHRSEH.

The protein operates within antibiotic biosynthesis; granaticin biosynthesis. Is needed for correct cyclization of the oligoketide leading to isochromanequinone formation. This Streptomyces violaceoruber protein is Granaticin polyketide synthase bifunctional cyclase/dehydratase (gra-orf4).